A 296-amino-acid polypeptide reads, in one-letter code: Tyrosine recombinase XerC (296 aa).

The Core-binding (CB) domain maps to 1–84 (MNKIQESFLY…TLRSFYEFWM (84 aa)). The Tyr recombinase domain maps to 105–286 (YLPHFFYEEE…SNQQLRKVYL (182 aa)). Catalysis depends on residues R145, K169, H238, R241, and H264. Y273 (O-(3'-phospho-DNA)-tyrosine intermediate) is an active-site residue.

The protein belongs to the 'phage' integrase family. XerC subfamily. Forms a cyclic heterotetrameric complex composed of two molecules of XerC and two molecules of XerD.

The protein resides in the cytoplasm. In terms of biological role, site-specific tyrosine recombinase, which acts by catalyzing the cutting and rejoining of the recombining DNA molecules. The XerC-XerD complex is essential to convert dimers of the bacterial chromosome into monomers to permit their segregation at cell division. It also contributes to the segregational stability of plasmids. This Staphylococcus carnosus (strain TM300) protein is Tyrosine recombinase XerC.